The chain runs to 232 residues: Small ribosomal subunit protein uS3 (232 aa).

The region spanning 39–107 is the KH type-2 domain; it reads VRQFLTKELA…PAQINIAEVR (69 aa).

The protein belongs to the universal ribosomal protein uS3 family. Part of the 30S ribosomal subunit. Forms a tight complex with proteins S10 and S14.

Functionally, binds the lower part of the 30S subunit head. Binds mRNA in the 70S ribosome, positioning it for translation. The protein is Small ribosomal subunit protein uS3 of Yersinia pestis bv. Antiqua (strain Antiqua).